An 898-amino-acid polypeptide reads, in one-letter code: Translation initiation factor IF-2 (898 aa).

2 disordered regions span residues 51 to 70 (RKSH…LKRK) and 114 to 303 (LAAE…KQHG). Basic and acidic residues-rich tracts occupy residues 114–171 (LAAE…EKSK) and 184–258 (PAKE…DDKG). Residues 398–567 (HRAPVVTIMG…LLQSELLELQ (170 aa)) form the tr-type G domain. The interval 407-414 (GHVDHGKT) is G1. 407–414 (GHVDHGKT) is a binding site for GTP. Positions 432 to 436 (GITQH) are G2. The interval 453–456 (DTPG) is G3. Residues 453–457 (DTPGH) and 507–510 (NKID) each bind GTP. The G4 stretch occupies residues 507–510 (NKID). The tract at residues 543–545 (SAH) is G5.

This sequence belongs to the TRAFAC class translation factor GTPase superfamily. Classic translation factor GTPase family. IF-2 subfamily.

It localises to the cytoplasm. In terms of biological role, one of the essential components for the initiation of protein synthesis. Protects formylmethionyl-tRNA from spontaneous hydrolysis and promotes its binding to the 30S ribosomal subunits. Also involved in the hydrolysis of GTP during the formation of the 70S ribosomal complex. In Alcanivorax borkumensis (strain ATCC 700651 / DSM 11573 / NCIMB 13689 / SK2), this protein is Translation initiation factor IF-2.